The chain runs to 309 residues: D-alanine--D-alanine ligase (309 aa).

The region spanning 110 to 305 (KLCWTGAGLP…FQELVWHILE (196 aa)) is the ATP-grasp domain. 136–191 (RQALGFPVIVKPAEEGSSIGMSRAATAEELAQAWERASGYGCAVFAERWIDGVEYT) contributes to the ATP binding site. Residues Asp259, Glu272, and Asn274 each contribute to the Mg(2+) site.

The protein belongs to the D-alanine--D-alanine ligase family. Mg(2+) serves as cofactor. It depends on Mn(2+) as a cofactor.

Its subcellular location is the cytoplasm. It catalyses the reaction 2 D-alanine + ATP = D-alanyl-D-alanine + ADP + phosphate + H(+). The protein operates within cell wall biogenesis; peptidoglycan biosynthesis. Its function is as follows. Cell wall formation. This is D-alanine--D-alanine ligase from Methylococcus capsulatus (strain ATCC 33009 / NCIMB 11132 / Bath).